A 156-amino-acid chain; its full sequence is Small ribosomal subunit protein uS7c (156 aa).

The protein belongs to the universal ribosomal protein uS7 family. As to quaternary structure, part of the 30S ribosomal subunit.

It is found in the plastid. Its subcellular location is the chloroplast. In terms of biological role, one of the primary rRNA binding proteins, it binds directly to 16S rRNA where it nucleates assembly of the head domain of the 30S subunit. In Rhodomonas salina (Cryptomonas salina), this protein is Small ribosomal subunit protein uS7c (rps7).